The primary structure comprises 1678 residues: MFGQNKSFGSSSFGGGSSGSGLFGQNNQNNQNKGLFGQPANNSGTTGLFGAAQNKPAGSIFGAASNTSSIFGSPQQPQNNQSSLFGGGQNNANRSIFGSTSSAAPASSSLFGNNANNTGTSSIFGSNNNAPSGGGLFGASTVSGTTVKFEPPISSDTMMRNGTTQTISTKHMCISAMSKYDGKSIEELRVEDYIANRKAPGTGTTSTGGGLFGASNTTNQAGSSGLFGSSNAQQKTSLFGGASTSSPFGGNTSTANTGSSLFGNNNANTSAASGSLFGAKPAGSSLFGSTATTGASTFGQTTGSSLFGNQQPQTNTGGSLFGNTQNQNQSGSLFGNTGTTGTGLFGQAQQQPQQQSSGFSFGGAPAATNAFGQPAAANTGGSLFGNTSTANTGSSLFGAKPATSTGFTFGATQPTTTNAFGSTNTGGGLFGNNAAKPGGLFGNTTNTGTGGGLFGSQPQASSGGLFGSNTQATQPLNTGFGNLAQPQIVMQQQVAPVPVIGVTADVLQMQANMKSLKSQLTNAPYGDSPLLKYNANPEIDGKSSPASTQRQLRFLAAKKGALSSSSDAQDSSFIIPPISKVMSDLSPAVTRSADVTKDLNYTSKEAPPSLARGLRNSTFNPNMSLTNRSVHESSALDKTIDSALDASMNGTSNRLGVRGSVRRSNLKQLDMSLLADSSRVGRESRVADPDALPRISESERRQDVVTSTPAVDPVQAVIQRHNDRNRDPPSLNLDTTCDEHTGLEPVSAATSSAASVVSTPSEETVNVNSAAGVKLTKPDYFSLPTINEMKNMIKNGRVVLEDGLTVGRSSYGSVYWPGRVELKDVALDEIVVFRHREVTVYPNEEEKAPEGQELNRPAEVTLERVWYTDKKTKKEVRDVVKLSEIGWREHLERQTIRMGAAFKDFRAETGSWVFRVDHFSKYGLADDDEPMDGSPPQQALQASSPLQVIDMNTSARDVNNQVQRKKVHKATDAHHQEIILERVPAPAALGDVVPIIRRVNRKGLGGGTLDDSREESCIGNMTTEFNESGHDSIIEEGQQPEKKPKLELLADLEYESSRFIRNLQELKVMPKANDPAHRFHGGGHSAKMIGYGKSKLIDIGIVKGRSSHVGWSETGCLVWSAQPRHNQVLFGTIDRTSDVNENTLISMLDVNVHVSETSRKGPSSQSNSVKSSLTSNFVTYSDSYSSMFAKYIDVAQAGGYDGHVSVWKLISALFPYERREGWSFERGEEIGEWLRTEAVKSVPDDRSADTSSNGVWNQLCLGDIDKAFQIAIDNNQPQLATMLQTSAVCPEATVHCFKAQLDNWKKCETLHLIPKETLKCYVLMSGLSHYEWDQDGKNHSINCLDGLNWIQALGLHVWYLRAWTGLEESYDAYQKDVNAGRAASNRGDLPGELIKLACESQHSVEVVLDCAAGENPNDYFLQWHVWSLLYSVGYRTMSKTSETRLHRNYSSQLEASSLSKYALFVLQHIDDDEERSTAVRSLLDRIARFTDNDMFDSISEQFDIPSEWIADAQFSIAKSVDDSTQLFELAVAAKNYLEICRLFVDDIAPTAVVAGDHDALKAACAMVRPFENQIPEWGATGMVYTDYCRLINLIENDAEEELLQDVLESLETRLHAPTISKNSLQKLSLQTIGRVLFEYRADKNTLPEWTKLLGHRQMFKIFRDRSSWGIERFTIEFD.

The span at 1-11 shows a compositional bias: low complexity; that stretch reads MFGQNKSFGSS. 5 disordered regions span residues 1–41, 68–100, 301–366, 441–473, and 603–631; these read MFGQ…QPAN, SSIF…FGST, TTGS…GAPA, FGNT…TQAT, and SKEA…RSVH. Residues 12 to 22 show a composition bias toward gly residues; the sequence is SFGGGSSGSGL. 2 stretches are compositionally biased toward low complexity: residues 23–38 and 73–83; these read FGQN…LFGQ and SPQQPQNNQSS. The segment covering 306 to 329 has biased composition (polar residues); it reads LFGNQQPQTNTGGSLFGNTQNQNQ. Residues 345–366 are compositionally biased toward low complexity; that stretch reads FGQAQQQPQQQSSGFSFGGAPA. Polar residues-rich tracts occupy residues 456-473 and 615-628; these read SQPQ…TQAT and RNST…LTNR. Residues 777-919 enclose the Peptidase S59 domain; that stretch reads KPDYFSLPTI…GSWVFRVDHF (143 aa). The active-site Nucleophile is S920.

This sequence belongs to the nucleoporin GLFG family. As to quaternary structure, part of the NPC. The Nup98 and Nup96 chains are autoproteolytically processed from a single precursor protein.

The protein localises to the cytoplasmic granule. It localises to the nucleus membrane. Its subcellular location is the nucleus. The protein resides in the nuclear pore complex. It is found in the nucleus envelope. The protein localises to the chromosome. Nup98 and Nup96 play a role in the bidirectional transport across the nucleoporin complex (NPC). Required for the nuclear import of hcp-4 during mitotic prophase, this step is essential for centrosome assembly and resolution. Regulates nucleoporin npp-5 localization to the nuclear membrane during interphase and to kinetochores during metaphase. Has a role in P granule integrity; may promote the 'liquid phase' of P granules by increasing the number of interacting RNA-protein complexes. Binds nos-2 mRNA, probably indirectly, and promotes its accumulation in P granules. The chain is Nuclear pore complex protein Nup98-Nup96 from Caenorhabditis elegans.